The sequence spans 599 residues: Sulfite reductase [NADPH] flavoprotein alpha-component (599 aa).

The 139-residue stretch at 64 to 202 (VTLISASQTG…AASEWRARVV (139 aa)) folds into the Flavodoxin-like domain. Residues 70 to 75 (SQTGNA), 117 to 120 (STQG), and 153 to 162 (LGDTSYEFFC) contribute to the FMN site. Residues 234–448 (DAPLTATLSV…IEHNDNFRLP (215 aa)) enclose the FAD-binding FR-type domain. FAD contacts are provided by residues threonine 322, alanine 356, 386 to 389 (RLYS), 404 to 406 (TVG), tyrosine 410, and 419 to 422 (GGAS). NADP(+) contacts are provided by residues 519 to 520 (SR), 525 to 529 (KIYVQ), and aspartate 561. Tyrosine 599 is an FAD binding site.

It belongs to the NADPH-dependent sulphite reductase flavoprotein subunit CysJ family. This sequence in the N-terminal section; belongs to the flavodoxin family. In the C-terminal section; belongs to the flavoprotein pyridine nucleotide cytochrome reductase family. In terms of assembly, alpha(8)-beta(8). The alpha component is a flavoprotein, the beta component is a hemoprotein. Requires FAD as cofactor. FMN serves as cofactor.

The enzyme catalyses hydrogen sulfide + 3 NADP(+) + 3 H2O = sulfite + 3 NADPH + 4 H(+). It functions in the pathway sulfur metabolism; hydrogen sulfide biosynthesis; hydrogen sulfide from sulfite (NADPH route): step 1/1. Functionally, component of the sulfite reductase complex that catalyzes the 6-electron reduction of sulfite to sulfide. This is one of several activities required for the biosynthesis of L-cysteine from sulfate. The flavoprotein component catalyzes the electron flow from NADPH -&gt; FAD -&gt; FMN to the hemoprotein component. This chain is Sulfite reductase [NADPH] flavoprotein alpha-component, found in Salmonella paratyphi A (strain ATCC 9150 / SARB42).